A 214-amino-acid polypeptide reads, in one-letter code: Adenylate kinase (214 aa).

10-15 contacts ATP; it reads GAGKGT. The tract at residues 30–59 is NMP; sequence STGDMLRAAIKAGTELGLEAKRVMDEGKLV. AMP contacts are provided by residues Thr31, Arg36, 57 to 59, 85 to 88, and Gln92; these read KLV and GFPR. The segment at 122–159 is LID; the sequence is GRRVHPASGRVYHVVYNPPKVEGKDNETGDDLIVRDDD. ATP contacts are provided by residues Arg123 and 132-133; that span reads VY. AMP is bound by residues Arg156 and Arg167. An ATP-binding site is contributed by Arg200.

Belongs to the adenylate kinase family. Monomer.

Its subcellular location is the cytoplasm. The enzyme catalyses AMP + ATP = 2 ADP. Its pathway is purine metabolism; AMP biosynthesis via salvage pathway; AMP from ADP: step 1/1. Catalyzes the reversible transfer of the terminal phosphate group between ATP and AMP. Plays an important role in cellular energy homeostasis and in adenine nucleotide metabolism. This chain is Adenylate kinase, found in Alteromonas mediterranea (strain DSM 17117 / CIP 110805 / LMG 28347 / Deep ecotype).